The sequence spans 801 residues: Phenylalanine--tRNA ligase beta subunit (801 aa).

Residues 39 to 147 enclose the tRNA-binding domain; sequence GGGLDEVVVA…TDLPLGVPVF (109 aa). Residues 401-477 form the B5 domain; that stretch reads LPRRTVRFRV…RLNGYNNIPV (77 aa). 4 residues coordinate Mg(2+): Asp-455, Asp-461, Glu-464, and Glu-465. The FDX-ACB domain occupies 708 to 801; sequence SRFPDTFRDI…LVKKLAVTIR (94 aa).

It belongs to the phenylalanyl-tRNA synthetase beta subunit family. Type 1 subfamily. As to quaternary structure, tetramer of two alpha and two beta subunits. Mg(2+) serves as cofactor.

It is found in the cytoplasm. It carries out the reaction tRNA(Phe) + L-phenylalanine + ATP = L-phenylalanyl-tRNA(Phe) + AMP + diphosphate + H(+). This Geobacter metallireducens (strain ATCC 53774 / DSM 7210 / GS-15) protein is Phenylalanine--tRNA ligase beta subunit.